The primary structure comprises 147 residues: Epididymal secretory protein E3-beta (147 aa).

An N-terminal signal peptide occupies residues 1–25 (MASSLKIWGTLLALLCILCTLLVQS).

In terms of tissue distribution, epididymis.

It is found in the secreted. Its function is as follows. Possible function in sperm maturation. The polypeptide is Epididymal secretory protein E3-beta (EDDM3B) (Homo sapiens (Human)).